We begin with the raw amino-acid sequence, 322 residues long: Arginase-1 (322 aa).

Lysine 17 bears the N6-succinyllysine mark. Phosphoserine occurs at positions 62 and 72. At lysine 75 the chain carries N6-succinyllysine. Residues histidine 101, aspartate 124, histidine 126, and aspartate 128 each contribute to the Mn(2+) site. Residues 126 to 130 (HTDIN) and 137 to 139 (SGN) contribute to the substrate site. At serine 163 the chain carries Phosphoserine. Aspartate 183 contacts substrate. The residue at position 217 (serine 217) is a Phosphoserine. Residues aspartate 232 and aspartate 234 each coordinate Mn(2+). Substrate-binding residues include threonine 246 and glutamate 277.

This sequence belongs to the arginase family. As to quaternary structure, homotrimer. Interacts with CMTM6. The cofactor is Mn(2+). In terms of tissue distribution, within the immune system initially reported to be selectively expressed in granulocytes (polymorphonuclear leukocytes [PMNs]). Also detected in macrophages mycobacterial granulomas. Expressed in group2 innate lymphoid cells (ILC2s) during lung disease.

Its subcellular location is the cytoplasm. The protein localises to the cytoplasmic granule. It catalyses the reaction L-arginine + H2O = urea + L-ornithine. It functions in the pathway nitrogen metabolism; urea cycle; L-ornithine and urea from L-arginine: step 1/1. Key element of the urea cycle converting L-arginine to urea and L-ornithine, which is further metabolized into metabolites proline and polyamides that drive collagen synthesis and bioenergetic pathways critical for cell proliferation, respectively; the urea cycle takes place primarily in the liver and, to a lesser extent, in the kidneys. In terms of biological role, functions in L-arginine homeostasis in nonhepatic tissues characterized by the competition between nitric oxide synthase (NOS) and arginase for the available intracellular substrate arginine. Arginine metabolism is a critical regulator of innate and adaptive immune responses. Involved in an antimicrobial effector pathway in polymorphonuclear granulocytes (PMN). Upon PMN cell death is liberated from the phagolysosome and depletes arginine in the microenvironment leading to suppressed T cell and natural killer (NK) cell proliferation and cytokine secretion. In group 2 innate lymphoid cells (ILC2s) promotes acute type 2 inflammation in the lung and is involved in optimal ILC2 proliferation but not survival. In humans, the immunological role in the monocytic/macrophage/dendritic cell (DC) lineage is unsure. This Homo sapiens (Human) protein is Arginase-1 (ARG1).